The chain runs to 104 residues: Large ribosomal subunit protein uL24 (104 aa).

Belongs to the universal ribosomal protein uL24 family. In terms of assembly, part of the 50S ribosomal subunit.

Its function is as follows. One of two assembly initiator proteins, it binds directly to the 5'-end of the 23S rRNA, where it nucleates assembly of the 50S subunit. One of the proteins that surrounds the polypeptide exit tunnel on the outside of the subunit. In Mesorhizobium japonicum (strain LMG 29417 / CECT 9101 / MAFF 303099) (Mesorhizobium loti (strain MAFF 303099)), this protein is Large ribosomal subunit protein uL24.